Consider the following 95-residue polypeptide: Basic phospholipase A2 (95 aa).

N6-palmitoyl lysine attachment occurs at residues Lys7 and Lys10. Ca(2+)-binding residues include Tyr23, Gly25, and Gly27. 5 cysteine pairs are disulfide-bonded: Cys24/Cys40, Cys39/Cys77, Cys46/Cys70, Cys53/Cys63, and Cys57/Cys68. His43 is a catalytic residue. Asp44 contacts Ca(2+). The active site involves Asp71.

Monomer. Ca(2+) serves as cofactor. Expressed by the venom gland.

Its subcellular location is the secreted. The enzyme catalyses a 1,2-diacyl-sn-glycero-3-phosphocholine + H2O = a 1-acyl-sn-glycero-3-phosphocholine + a fatty acid + H(+). PLA2 catalyzes the calcium-dependent hydrolysis of the 2-acyl groups in 3-sn-phosphoglycerides. Induces local and systemic myotoxicity in an intramuscular mouse model. Induces local edema in a mouse footpad assay. Does not exhibit any anticoagulant effects. Does not mediate an antibacterial effect against Gram-negative and Gram-positive bacteria. This chain is Basic phospholipase A2, found in Agkistrodon piscivorus leucostoma (Western cottonmouth).